A 376-amino-acid polypeptide reads, in one-letter code: TelA-like protein SE_1089 (376 aa).

It belongs to the TelA family.

This is TelA-like protein SE_1089 from Staphylococcus epidermidis (strain ATCC 12228 / FDA PCI 1200).